The chain runs to 150 residues: MESTGKVKKAFGGRKPPGAPKTKSVSKSMKAGLQFPVGRITRFLKKGRYAQRLGGGAPVYMAAVLEYLAAEVLELAGNAARDNKKSRIIPRHLLLAIRNDEELGKLLSGVTIAHGGVLPNINSVLLPKKSATKPAEEKATKSPVKSPKKA.

Residues 1–12 (MESTGKVKKAFG) show a composition bias toward basic residues. Disordered regions lie at residues 1–27 (MEST…SVSK) and 129–150 (KSAT…PKKA). Phosphoserine is present on S146. Positions 146-149 (SPKK) match the SPKK motif motif.

It belongs to the histone H2A family. In terms of assembly, the nucleosome is a histone octamer containing two molecules each of H2A, H2B, H3 and H4 assembled in one H3-H4 heterotetramer and two H2A-H2B heterodimers. The octamer wraps approximately 147 bp of DNA. In terms of processing, not ubiquitinated. Strong expression through-out the roots and leaves. Also found in meristems and dividing cells.

It localises to the nucleus. The protein resides in the chromosome. Functionally, core component of nucleosome. Nucleosomes wrap and compact DNA into chromatin, limiting DNA accessibility to the cellular machineries which require DNA as a template. Histones thereby play a central role in transcription regulation, DNA repair, DNA replication and chromosomal stability. DNA accessibility is regulated via a complex set of post-translational modifications of histones, also called histone code, and nucleosome remodeling. This Arabidopsis thaliana (Mouse-ear cress) protein is Probable histone H2A.7.